The chain runs to 431 residues: UDP-N-acetylmuramate--L-alanine ligase (431 aa).

108–114 contributes to the ATP binding site; sequence GAHGKST.

It belongs to the MurCDEF family.

It localises to the cytoplasm. The catalysed reaction is UDP-N-acetyl-alpha-D-muramate + L-alanine + ATP = UDP-N-acetyl-alpha-D-muramoyl-L-alanine + ADP + phosphate + H(+). It functions in the pathway cell wall biogenesis; peptidoglycan biosynthesis. Functionally, cell wall formation. This is UDP-N-acetylmuramate--L-alanine ligase from Campylobacter jejuni subsp. doylei (strain ATCC BAA-1458 / RM4099 / 269.97).